The primary structure comprises 498 residues: ATP synthase subunit beta, chloroplastic (498 aa).

Residue 172 to 179 (GGAGVGKT) coordinates ATP.

Belongs to the ATPase alpha/beta chains family. F-type ATPases have 2 components, CF(1) - the catalytic core - and CF(0) - the membrane proton channel. CF(1) has five subunits: alpha(3), beta(3), gamma(1), delta(1), epsilon(1). CF(0) has four main subunits: a(1), b(1), b'(1) and c(9-12).

The protein localises to the plastid. Its subcellular location is the chloroplast thylakoid membrane. It catalyses the reaction ATP + H2O + 4 H(+)(in) = ADP + phosphate + 5 H(+)(out). Its function is as follows. Produces ATP from ADP in the presence of a proton gradient across the membrane. The catalytic sites are hosted primarily by the beta subunits. The sequence is that of ATP synthase subunit beta, chloroplastic from Lactuca sativa (Garden lettuce).